The sequence spans 712 residues: Golgin candidate 3 (712 aa).

Residues 23 to 49 (DEEEDDLHKYGSANGVSNSDRRNSSGF) are disordered. Polar residues predominate over residues 36–49 (NGVSNSDRRNSSGF). A coiled-coil region spans residues 65–134 (AHHEIERYKA…LKEARTDISR (70 aa)). Positions 135–150 (GSNNYAIKGNNDQSPN) are enriched in polar residues. Disordered stretches follow at residues 135 to 176 (GSNN…TDSF) and 306 to 347 (ESRK…MEQS). Coiled coils occupy residues 197 to 313 (QATE…LTNS), 340 to 558 (GKEE…LNRM), and 659 to 690 (LKDA…QEAA). The segment covering 328–344 (STLDKEKPESFPGKEEM) has biased composition (basic and acidic residues). The GRIP domain maps to 557-608 (RMSMESDYLVDRRIVIKLLVTYFQKNHNKEVLDLMVRMLGFSEEDKERIGAA). The disordered stretch occupies residues 666 to 712 (ERREAEEAAASKAKQDSERTRQEAALHDSEFSTVPLRSSESNQRLSR). The span at 678–695 (AKQDSERTRQEAALHDSE) shows a compositional bias: basic and acidic residues. Over residues 696-712 (FSTVPLRSSESNQRLSR) the composition is skewed to polar residues.

Interacts with ARF1; preferentially with the active form of the protein.

The protein resides in the golgi apparatus. It is found in the endosome. Its function is as follows. Golgi matrix protein playing a role in tethering of vesicles to Golgi membranes and in maintaining the overall structure of the Golgi apparatus. The protein is Golgin candidate 3 (GC3) of Arabidopsis thaliana (Mouse-ear cress).